The sequence spans 137 residues: Nuclear transition protein 2 (137 aa).

The span at 1 to 21 shows a compositional bias: polar residues; the sequence is MDTKTQSLPNAHTQPHSNSGP. Positions 1-137 are disordered; sequence MDTKTQSLPN…KRRSSGRKYN (137 aa). Zn(2+)-binding residues include H12, H16, H24, C29, C31, C35, and C38. Low complexity predominate over residues 22–74; sequence QSHACNQCSCSHHCQNCSQSCDRSQSCSRSRSSSQSPTGHRSLPGHQSQSLSP. Positions 78–91 are enriched in basic residues; it reads PRHRKRAMHSHRCP. A Nuclear localization signal motif is present at residues 110–118; sequence GKANKRKGI. Residues 126–137 are compositionally biased toward basic residues; that stretch reads KTKRRSSGRKYN. Residue S132 is modified to Phosphoserine.

This sequence belongs to the nuclear transition protein 2 family. In terms of tissue distribution, testis. Expression is restricted to haploid germ cells.

It is found in the nucleus. The protein resides in the nucleolus. Its subcellular location is the chromosome. Plays a key role in the replacement of histones to protamine in the elongating spermatids of mammals. In condensing spermatids, loaded onto the nucleosomes, where it promotes the recruitment and processing of protamines, which are responsible for histone eviction. The protein is Nuclear transition protein 2 (TNP2) of Sus scrofa (Pig).